A 357-amino-acid chain; its full sequence is Probable cinnamyl alcohol dehydrogenase (357 aa).

Cysteine 47 is a Zn(2+) binding site. Residue serine 49 participates in NADP(+) binding. Residues histidine 69, glutamate 70, cysteine 100, cysteine 103, cysteine 106, cysteine 114, and cysteine 163 each contribute to the Zn(2+) site. NADP(+)-binding positions include threonine 167, 188–193 (GLGGVG), 211–216 (SSSDKK), threonine 251, glycine 275, and 298–300 (SFI).

Belongs to the zinc-containing alcohol dehydrogenase family. As to quaternary structure, homodimer. Zn(2+) is required as a cofactor.

The catalysed reaction is (E)-cinnamyl alcohol + NADP(+) = (E)-cinnamaldehyde + NADPH + H(+). It carries out the reaction (E)-coniferol + NADP(+) = (E)-coniferaldehyde + NADPH + H(+). The enzyme catalyses (E)-sinapyl alcohol + NADP(+) = (E)-sinapaldehyde + NADPH + H(+). It catalyses the reaction (E)-4-coumaroyl alcohol + NADP(+) = (E)-4-coumaraldehyde + NADPH + H(+). The catalysed reaction is (E)-caffeyl alcohol + NADP(+) = (E)-caffeyl aldehyde + NADPH + H(+). It participates in aromatic compound metabolism; phenylpropanoid biosynthesis. In terms of biological role, involved in lignin biosynthesis. Catalyzes the final step specific for the production of lignin monomers. Catalyzes the NADPH-dependent reduction of coniferaldehyde, 5-hydroxyconiferaldehyde, sinapaldehyde, 4-coumaraldehyde and caffeyl aldehyde to their respective alcohols. This chain is Probable cinnamyl alcohol dehydrogenase (CAD), found in Pinus radiata (Monterey pine).